Here is a 441-residue protein sequence, read N- to C-terminus: Enolase (441 aa).

Gln-164 provides a ligand contact to (2R)-2-phosphoglycerate. Glu-206 serves as the catalytic Proton donor. Mg(2+) contacts are provided by Asp-243, Glu-289, and Asp-316. (2R)-2-phosphoglycerate-binding residues include Lys-341, Arg-370, Ser-371, and Lys-392. Lys-341 functions as the Proton acceptor in the catalytic mechanism.

Belongs to the enolase family. Mg(2+) is required as a cofactor.

Its subcellular location is the cytoplasm. It is found in the secreted. It localises to the cell surface. The enzyme catalyses (2R)-2-phosphoglycerate = phosphoenolpyruvate + H2O. It participates in carbohydrate degradation; glycolysis; pyruvate from D-glyceraldehyde 3-phosphate: step 4/5. Functionally, catalyzes the reversible conversion of 2-phosphoglycerate (2-PG) into phosphoenolpyruvate (PEP). It is essential for the degradation of carbohydrates via glycolysis. The chain is Enolase from Leuconostoc citreum (strain KM20).